The following is a 77-amino-acid chain: uncharacterized protein (77 aa).

The chain crosses the membrane as a helical span at residues 57–76 (NSAVICTLIANLMAFFMLLT).

The protein resides in the membrane. This is an uncharacterized protein from Schizosaccharomyces pombe (strain 972 / ATCC 24843) (Fission yeast).